The primary structure comprises 269 residues: Hydroxyethylthiazole kinase (269 aa).

M41 provides a ligand contact to substrate. ATP contacts are provided by R117 and S163. G190 contacts substrate.

This sequence belongs to the Thz kinase family. Requires Mg(2+) as cofactor.

It catalyses the reaction 5-(2-hydroxyethyl)-4-methylthiazole + ATP = 4-methyl-5-(2-phosphooxyethyl)-thiazole + ADP + H(+). Its pathway is cofactor biosynthesis; thiamine diphosphate biosynthesis; 4-methyl-5-(2-phosphoethyl)-thiazole from 5-(2-hydroxyethyl)-4-methylthiazole: step 1/1. Its function is as follows. Catalyzes the phosphorylation of the hydroxyl group of 4-methyl-5-beta-hydroxyethylthiazole (THZ). The protein is Hydroxyethylthiazole kinase of Latilactobacillus sakei subsp. sakei (strain 23K) (Lactobacillus sakei subsp. sakei).